A 244-amino-acid polypeptide reads, in one-letter code: MKRFAIEFAYDGTKFFGYQGQPNVRTVQGDLEDALERIFKERIYTQAAGRTDAGVHANGQVAAFNCPIERLTETDIKNALNANLPDDIYVKKAWVVDKSFNPRFAATKRIYHYFISTNEKDVFMRNYVWNFRYDLDIEAMRKAASFLEGEHDFSSFKKGKDEKNPVRTIYRIRILTLKKGLILIRVEGRSFLRSMVRNIVGSLVRVGLGQWKPEKILEVLEKRSRQEAAGTAPPHGLYLYKVLF.

Asp-52 acts as the Nucleophile in catalysis. A substrate-binding site is contributed by Tyr-111.

Belongs to the tRNA pseudouridine synthase TruA family. As to quaternary structure, homodimer.

It carries out the reaction uridine(38/39/40) in tRNA = pseudouridine(38/39/40) in tRNA. Formation of pseudouridine at positions 38, 39 and 40 in the anticodon stem and loop of transfer RNAs. The chain is tRNA pseudouridine synthase A from Thermosipho africanus (strain TCF52B).